We begin with the raw amino-acid sequence, 266 residues long: Proliferating cell nuclear antigen (266 aa).

A DNA-binding region spans residues 61-80 (RCDRNLSMGMNLNNMAKMLK).

Belongs to the PCNA family.

It is found in the nucleus. Functionally, this protein is an auxiliary protein of DNA polymerase delta and is involved in the control of eukaryotic DNA replication by increasing the polymerase's processibility during elongation of the leading strand. This Pisum sativum (Garden pea) protein is Proliferating cell nuclear antigen (PCNA).